The following is an 86-amino-acid chain: Small ribosomal subunit protein uS17 (86 aa).

The protein belongs to the universal ribosomal protein uS17 family. Part of the 30S ribosomal subunit.

Functionally, one of the primary rRNA binding proteins, it binds specifically to the 5'-end of 16S ribosomal RNA. This chain is Small ribosomal subunit protein uS17, found in Lactococcus lactis subsp. cremoris (strain MG1363).